The sequence spans 407 residues: Probable tRNA sulfurtransferase (407 aa).

Positions 61–165 constitute a THUMP domain; sequence EEMCNRLKKV…LDAIYMYDQV (105 aa). Residues 183–184, 208–209, R265, G287, and Q296 each bind ATP; these read ML and HF.

It belongs to the ThiI family.

It is found in the cytoplasm. The enzyme catalyses [ThiI sulfur-carrier protein]-S-sulfanyl-L-cysteine + a uridine in tRNA + 2 reduced [2Fe-2S]-[ferredoxin] + ATP + H(+) = [ThiI sulfur-carrier protein]-L-cysteine + a 4-thiouridine in tRNA + 2 oxidized [2Fe-2S]-[ferredoxin] + AMP + diphosphate. It carries out the reaction [ThiS sulfur-carrier protein]-C-terminal Gly-Gly-AMP + S-sulfanyl-L-cysteinyl-[cysteine desulfurase] + AH2 = [ThiS sulfur-carrier protein]-C-terminal-Gly-aminoethanethioate + L-cysteinyl-[cysteine desulfurase] + A + AMP + 2 H(+). It functions in the pathway cofactor biosynthesis; thiamine diphosphate biosynthesis. Catalyzes the ATP-dependent transfer of a sulfur to tRNA to produce 4-thiouridine in position 8 of tRNAs, which functions as a near-UV photosensor. Also catalyzes the transfer of sulfur to the sulfur carrier protein ThiS, forming ThiS-thiocarboxylate. This is a step in the synthesis of thiazole, in the thiamine biosynthesis pathway. The sulfur is donated as persulfide by IscS. In Staphylococcus saprophyticus subsp. saprophyticus (strain ATCC 15305 / DSM 20229 / NCIMB 8711 / NCTC 7292 / S-41), this protein is Probable tRNA sulfurtransferase.